A 279-amino-acid chain; its full sequence is Dehydrogenase/reductase SDR family member 4 (279 aa).

An NADP(+)-binding site is contributed by 37 to 61; the sequence is LVTASTDGIGFAIARRLAEDGAHVV. At Lys93 the chain carries N6-acetyllysine; alternate. Lys93 carries the post-translational modification N6-succinyllysine; alternate. Position 106 is an N6-acetyllysine (Lys106). Ser170 lines the substrate pocket. The active-site Proton acceptor is the Tyr183. An NADP(+)-binding site is contributed by Lys187. Lys217 is modified (N6-acetyllysine; alternate). Lys217 bears the N6-succinyllysine; alternate mark. Position 221 is a phosphoserine (Ser221). Lys228 and Lys235 each carry N6-succinyllysine. A Peroxisomal targeting signal motif is present at residues 277–279; the sequence is SRL.

The protein belongs to the short-chain dehydrogenases/reductases (SDR) family. As to quaternary structure, homotetramer.

It localises to the peroxisome. It catalyses the reaction a secondary alcohol + NADP(+) = a ketone + NADPH + H(+). The enzyme catalyses 3alpha-hydroxy-5beta-pregnan-20-one + NADP(+) = 5beta-pregnan-3,20-dione + NADPH + H(+). It carries out the reaction 5beta-dihydrotestosterone + NADPH + H(+) = 5beta-androstane-3alpha,17beta-diol + NADP(+). The catalysed reaction is all-trans-retinol + NADP(+) = all-trans-retinal + NADPH + H(+). It catalyses the reaction isatin + NADPH + H(+) = 3-hydroxyindolin-2-one + NADP(+). Functionally, NADPH-dependent oxidoreductase which catalyzes the reduction of a variety of compounds bearing carbonyl groups including ketosteroids, alpha-dicarbonyl compounds, aldehydes, aromatic ketones and quinones. Reduces all-trans-retinal and 9-cis retinal. Reduces 3-ketosteroids and benzil into 3alpha-hydroxysteroids and S-benzoin, respectively, in contrast to the stereoselectivity of primates DHRS4s which produce 3beta-hydroxysteroids and R-benzoin. In the reverse reaction, catalyzes the NADP-dependent oxidation of 3alpha-hydroxysteroids and alcohol, but with much lower efficiency. Involved in the metabolism of 3alpha-hydroxysteroids, retinoid, isatin and xenobiotic carbonyl compounds. This chain is Dehydrogenase/reductase SDR family member 4, found in Mus musculus (Mouse).